The chain runs to 409 residues: Multifunctional CCA protein (409 aa).

Residues Gly-8 and Arg-11 each coordinate ATP. CTP is bound by residues Gly-8 and Arg-11. Positions 21 and 23 each coordinate Mg(2+). Residues Arg-91, Arg-137, and Arg-140 each coordinate ATP. The CTP site is built by Arg-91, Arg-137, and Arg-140. Positions Thr-228–Trp-329 constitute an HD domain.

Belongs to the tRNA nucleotidyltransferase/poly(A) polymerase family. Bacterial CCA-adding enzyme type 1 subfamily. Monomer. Can also form homodimers and oligomers. Mg(2+) serves as cofactor. Requires Ni(2+) as cofactor.

The catalysed reaction is a tRNA precursor + 2 CTP + ATP = a tRNA with a 3' CCA end + 3 diphosphate. It carries out the reaction a tRNA with a 3' CCA end + 2 CTP + ATP = a tRNA with a 3' CCACCA end + 3 diphosphate. Its function is as follows. Catalyzes the addition and repair of the essential 3'-terminal CCA sequence in tRNAs without using a nucleic acid template. Adds these three nucleotides in the order of C, C, and A to the tRNA nucleotide-73, using CTP and ATP as substrates and producing inorganic pyrophosphate. tRNA 3'-terminal CCA addition is required both for tRNA processing and repair. Also involved in tRNA surveillance by mediating tandem CCA addition to generate a CCACCA at the 3' terminus of unstable tRNAs. While stable tRNAs receive only 3'-terminal CCA, unstable tRNAs are marked with CCACCA and rapidly degraded. The polypeptide is Multifunctional CCA protein (Psychromonas ingrahamii (strain DSM 17664 / CCUG 51855 / 37)).